The primary structure comprises 194 residues: Thymidine kinase (194 aa).

Residues 15–22 (GSMFSGKS) and 88–91 (DEVQ) contribute to the ATP site. E89 (proton acceptor) is an active-site residue. Residues C145, C148, C183, and C186 each contribute to the Zn(2+) site.

The protein belongs to the thymidine kinase family. As to quaternary structure, homotetramer.

Its subcellular location is the cytoplasm. The enzyme catalyses thymidine + ATP = dTMP + ADP + H(+). The chain is Thymidine kinase from Bacillus cereus (strain AH820).